Consider the following 256-residue polypeptide: uncharacterized protein (256 aa).

Residue 29–36 (GDDHSGKT) participates in ATP binding.

This is an uncharacterized protein from Saccharomyces cerevisiae (strain ATCC 204508 / S288c) (Baker's yeast).